The chain runs to 311 residues: Aspartate carbamoyltransferase catalytic subunit (311 aa).

Residues Arg-55 and Thr-56 each contribute to the carbamoyl phosphate site. Lys-85 is a binding site for L-aspartate. Residues Arg-106, His-135, and Gln-138 each contribute to the carbamoyl phosphate site. L-aspartate is bound by residues Arg-168 and Arg-230. The carbamoyl phosphate site is built by Leu-268 and Pro-269.

The protein belongs to the aspartate/ornithine carbamoyltransferase superfamily. ATCase family. As to quaternary structure, heterododecamer (2C3:3R2) of six catalytic PyrB chains organized as two trimers (C3), and six regulatory PyrI chains organized as three dimers (R2).

It carries out the reaction carbamoyl phosphate + L-aspartate = N-carbamoyl-L-aspartate + phosphate + H(+). It participates in pyrimidine metabolism; UMP biosynthesis via de novo pathway; (S)-dihydroorotate from bicarbonate: step 2/3. Functionally, catalyzes the condensation of carbamoyl phosphate and aspartate to form carbamoyl aspartate and inorganic phosphate, the committed step in the de novo pyrimidine nucleotide biosynthesis pathway. The polypeptide is Aspartate carbamoyltransferase catalytic subunit (Serratia proteamaculans (strain 568)).